The primary structure comprises 748 residues: MLTRLREIVEKVASAPRLNEALNILVTDICLAMDTEVCSVYLADHDRRCYYLMATRGLKKPRGRTVTLAFDEGIVGLVGRLAEPINLADAQKHPSFKYIPSVKEERFRAFLGVPIIQRRQLLGVLVVQQRELRQYDESEESFLVTLATQMAAILSQSQLTALFGQYRQTRIRALPAAPGVAIAEGWQDATLPLMEQVYQASTLDPALERERLTGALEEAANEFRRYSKRFAAGAQKETAAIFDLYSHLLSDTRLRRELFAEVDKGSVAEWAVKTVIEKFAEQFAALSDNYLKERAGDLRALGQRLLFHLDDANQGPNAWPERFILVADELSATTLAELPQDRLVGVVVRDGAANSHAAIMVRALGIPTVMGADIQPSVLHRRTLIVDGYRGELLVDPEPVLLQEYQRLISEEIELSRLAEDDVNLPAQLKSGERIKVMLNAGLSPEHEEKLGSRIDGIGLYRTEIPFMLQSGFPSEEEQVAQYQGMLQMFNDKPVTLRTLDVGADKQLPYMPISEENPCLGWRGIRITLDQPEIFLIQVRAMLRANAATGNLNILLPMVTSLDEVDEARRLIERAGREVEEMIGYEIPKPRIGIMLEVPSMVFMLPHLAKRVDFISVGTNDLTQYILAVDRNNTRVANIYDSLHPAMLRALAMIAREAEIHGIDLRLCGEMAGDPMCVAILIGLGYRHLSMNGRSVARAKYLLRRIDYAEAENLAQRSLEAQLATEVRHQVAAFMERRGMGGLIRGGL.

The region spanning 1–127 (MLTRLREIVE…RRQLLGVLVV (127 aa)) is the GAF domain. Positions 128–170 (QQRELRQYDESEESFLVTLATQMAAILSQSQLTALFGQYRQTR) are linker. Residues 171–748 (IRALPAAPGV…GMGGLIRGGL (578 aa)) form a PTS EI region. Histidine 356 (tele-phosphohistidine intermediate) is an active-site residue. Phosphoenolpyruvate contacts are provided by arginine 462 and arginine 498. Mg(2+) contacts are provided by glutamate 597 and aspartate 621. Phosphoenolpyruvate-binding positions include 620 to 621 (ND) and arginine 631. The Proton donor role is filled by cysteine 668.

The protein belongs to the PEP-utilizing enzyme family. Mg(2+) is required as a cofactor.

Its subcellular location is the cytoplasm. It carries out the reaction L-histidyl-[protein] + phosphoenolpyruvate = N(pros)-phospho-L-histidyl-[protein] + pyruvate. Its activity is regulated as follows. Inhibited by GDP and FAD. Its function is as follows. Component of the phosphoenolpyruvate-dependent nitrogen-metabolic phosphotransferase system (nitrogen-metabolic PTS), that seems to be involved in regulating nitrogen metabolism. Enzyme I-Ntr transfers the phosphoryl group from phosphoenolpyruvate (PEP) to the phosphoryl carrier protein (NPr). Could function in the transcriptional regulation of sigma-54 dependent operons in conjunction with the NPr (PtsO) and EIIA-Ntr (PtsN) proteins. Enzyme I-Ntr is specific for NPr. The protein is Phosphoenolpyruvate-dependent phosphotransferase system (ptsP) of Escherichia coli (strain K12).